Reading from the N-terminus, the 141-residue chain is Protein X (141 aa).

Low complexity predominate over residues 24 to 48 (QSSGPPFPRPSAGSAASPASSLSAS). A disordered region spans residues 24–51 (QSSGPPFPRPSAGSAASPASSLSASDES). A mitochondrial targeting sequence region spans residues 68–113 (PCCLVVTCAELRTMDSTVNFVSWHANRQLGMPSKDLWTPYIRDQLL).

The protein belongs to the orthohepadnavirus protein X family. As to quaternary structure, may form homodimer. May interact with host CEBPA, CFLAR, CREB1, DDB1, E4F1, HBXIP, HSPD1/HSP60, NFKBIA, POLR2E and SMAD4. Interacts with host SMC5-SMC6 complex and induces its degradation. Interacts with host TRPC4AP; leading to prevent ubiquitination of TRPC4AP. Interacts with host PLSCR1; this interaction promotes ubiquitination and degradation of HBx and impairs HBx-mediated cell proliferation. A fraction may be phosphorylated in insect cells and HepG2 cells, a human hepatoblastoma cell line. Phosphorylated in vitro by host protein kinase C or mitogen-activated protein kinase. N-acetylated in insect cells.

The protein resides in the host cytoplasm. It localises to the host nucleus. The protein localises to the host mitochondrion. Multifunctional protein that plays a role in silencing host antiviral defenses and promoting viral transcription. Does not seem to be essential for HBV infection. May be directly involved in development of cirrhosis and liver cancer (hepatocellular carcinoma). Most of cytosolic activities involve modulation of cytosolic calcium. The effect on apoptosis is controversial depending on the cell types in which the studies have been conducted. May induce apoptosis by localizing in mitochondria and causing loss of mitochondrial membrane potential. May also modulate apoptosis by binding host CFLAR, a key regulator of the death-inducing signaling complex (DISC). Promotes viral transcription by using the host E3 ubiquitin ligase DDB1 to target the SMC5-SMC6 complex to proteasomal degradation. This host complex would otherwise bind to viral episomal DNA, and prevents its transcription. Moderately stimulates transcription of many different viral and cellular transcription elements. Promoters and enhancers stimulated by HBx contain DNA binding sites for NF-kappa-B, AP-1, AP-2, c-EBP, ATF/CREB, or the calcium-activated factor NF-AT. In Woodchuck hepatitis B virus (isolate 1) (WHV), this protein is Protein X.